Consider the following 73-residue polypeptide: UPF0154 protein BCG9842_B1526 (73 aa).

Residues Ile-3 to Phe-23 traverse the membrane as a helical segment.

This sequence belongs to the UPF0154 family.

It is found in the cell membrane. The chain is UPF0154 protein BCG9842_B1526 from Bacillus cereus (strain G9842).